Here is a 200-residue protein sequence, read N- to C-terminus: Recombination protein RecR (200 aa).

A C4-type zinc finger spans residues 57 to 72 (CSQCRTFTEQETCAIC). The 96-residue stretch at 81-176 (GLLCVVEMPA…KVSRIAHGIP (96 aa)) folds into the Toprim domain.

It belongs to the RecR family.

May play a role in DNA repair. It seems to be involved in an RecBC-independent recombinational process of DNA repair. It may act with RecF and RecO. This chain is Recombination protein RecR, found in Actinobacillus succinogenes (strain ATCC 55618 / DSM 22257 / CCUG 43843 / 130Z).